The following is a 339-amino-acid chain: Anthranilate phosphoribosyltransferase (339 aa).

5-phospho-alpha-D-ribose 1-diphosphate contacts are provided by residues Gly81, 84-85, Thr89, 91-94, 109-117, and Ser121; these read GD, NVST, and KHGNRSVSS. Gly81 lines the anthranilate pocket. Residue Ser93 participates in Mg(2+) binding. Asn112 lines the anthranilate pocket. Arg167 serves as a coordination point for anthranilate. The Mg(2+) site is built by Asp226 and Glu227.

This sequence belongs to the anthranilate phosphoribosyltransferase family. Homodimer. Mg(2+) is required as a cofactor.

It catalyses the reaction N-(5-phospho-beta-D-ribosyl)anthranilate + diphosphate = 5-phospho-alpha-D-ribose 1-diphosphate + anthranilate. The protein operates within amino-acid biosynthesis; L-tryptophan biosynthesis; L-tryptophan from chorismate: step 2/5. Catalyzes the transfer of the phosphoribosyl group of 5-phosphorylribose-1-pyrophosphate (PRPP) to anthranilate to yield N-(5'-phosphoribosyl)-anthranilate (PRA). The protein is Anthranilate phosphoribosyltransferase of Persephonella marina (strain DSM 14350 / EX-H1).